The chain runs to 376 residues: 26S proteasome non-ATPase regulatory subunit 13 (376 aa).

Residues 171 to 338 (SYYKDALRFL…KRVHMTWVQP (168 aa)) enclose the PCI domain. An N6-acetyllysine modification is found at Lys-298.

Belongs to the proteasome subunit S11 family. As to quaternary structure, component of the 19S proteasome regulatory particle complex. The 26S proteasome consists of a 20S core particle (CP) and two 19S regulatory subunits (RP). The regulatory particle is made of a lid composed of 9 subunits including PSMD13, a base containing 6 ATPases and few additional components.

In terms of biological role, component of the 26S proteasome, a multiprotein complex involved in the ATP-dependent degradation of ubiquitinated proteins. This complex plays a key role in the maintenance of protein homeostasis by removing misfolded or damaged proteins, which could impair cellular functions, and by removing proteins whose functions are no longer required. Therefore, the proteasome participates in numerous cellular processes, including cell cycle progression, apoptosis, or DNA damage repair. The polypeptide is 26S proteasome non-ATPase regulatory subunit 13 (Psmd13) (Mus musculus (Mouse)).